Consider the following 172-residue polypeptide: NADH dehydrogenase [ubiquinone] 1 alpha subcomplex subunit 8 (172 aa).

CHCH domains are found at residues 33–74 (GAQC…FRQI) and 75–118 (KRHC…LGWV). Short sequence motifs (cx9C motif) lie at residues 36–46 (CDKPNKEFMLC), 56–66 (CLEEGKLVNQC), 78–88 (CAEPFTEYWTC), and 100–110 (CRKQQAQFDEC). 4 disulfides stabilise this stretch: C36/C66, C46/C56, C78/C110, and C88/C100. Positions 133–159 (TDRPLPENPYHSRARPEPNPEVEGDLK) are disordered. Basic and acidic residues predominate over residues 146–159 (ARPEPNPEVEGDLK).

This sequence belongs to the complex I NDUFA8 subunit family. Complex I is composed of 45 different subunits.

It localises to the mitochondrion inner membrane. Its subcellular location is the mitochondrion intermembrane space. It is found in the mitochondrion. Its function is as follows. Accessory subunit of the mitochondrial membrane respiratory chain NADH dehydrogenase (Complex I), that is believed not to be involved in catalysis. Complex I functions in the transfer of electrons from NADH to the respiratory chain. The immediate electron acceptor for the enzyme is believed to be ubiquinone. The sequence is that of NADH dehydrogenase [ubiquinone] 1 alpha subcomplex subunit 8 (NDUFA8) from Bos taurus (Bovine).